The chain runs to 199 residues: 7-methyl-GTP pyrophosphatase (199 aa).

Catalysis depends on Asp-73, which acts as the Proton acceptor.

The protein belongs to the Maf family. YceF subfamily. The cofactor is a divalent metal cation.

It is found in the cytoplasm. The catalysed reaction is N(7)-methyl-GTP + H2O = N(7)-methyl-GMP + diphosphate + H(+). In terms of biological role, nucleoside triphosphate pyrophosphatase that hydrolyzes 7-methyl-GTP (m(7)GTP). May have a dual role in cell division arrest and in preventing the incorporation of modified nucleotides into cellular nucleic acids. This chain is 7-methyl-GTP pyrophosphatase, found in Bordetella pertussis (strain Tohama I / ATCC BAA-589 / NCTC 13251).